The primary structure comprises 161 residues: Endoribonuclease YbeY (161 aa).

Residues His-120, His-124, and Asp-130 each contribute to the Zn(2+) site.

The protein belongs to the endoribonuclease YbeY family. Zn(2+) is required as a cofactor.

It is found in the cytoplasm. Its function is as follows. Single strand-specific metallo-endoribonuclease involved in late-stage 70S ribosome quality control and in maturation of the 3' terminus of the 16S rRNA. This is Endoribonuclease YbeY from Chlamydia trachomatis serovar A (strain ATCC VR-571B / DSM 19440 / HAR-13).